The following is a 441-amino-acid chain: Ribosomal protein uS12 methylthiotransferase RimO (441 aa).

The 111-residue stretch at 8 to 118 folds into the MTTase N-terminal domain; sequence PKIGFVSLGC…VLEHVHHYVP (111 aa). [4Fe-4S] cluster is bound by residues Cys-17, Cys-53, Cys-82, Cys-150, Cys-154, and Cys-157. A Radical SAM core domain is found at 136–373; it reads LTPRHYAYLK…MQLQQQISAE (238 aa). One can recognise a TRAM domain in the interval 376 to 441; sequence QEKVGREILV…DEYDLWGSRV (66 aa).

It belongs to the methylthiotransferase family. RimO subfamily. The cofactor is [4Fe-4S] cluster.

It localises to the cytoplasm. The enzyme catalyses L-aspartate(89)-[ribosomal protein uS12]-hydrogen + (sulfur carrier)-SH + AH2 + 2 S-adenosyl-L-methionine = 3-methylsulfanyl-L-aspartate(89)-[ribosomal protein uS12]-hydrogen + (sulfur carrier)-H + 5'-deoxyadenosine + L-methionine + A + S-adenosyl-L-homocysteine + 2 H(+). Catalyzes the methylthiolation of an aspartic acid residue of ribosomal protein uS12. The polypeptide is Ribosomal protein uS12 methylthiotransferase RimO (Shigella flexneri).